A 395-amino-acid polypeptide reads, in one-letter code: Elongation factor Tu (395 aa).

The region spanning 10–204 (KPHVNIGTIG…AVDEYIPTPQ (195 aa)) is the tr-type G domain. The tract at residues 19-26 (GHVDHGKT) is G1. 19-26 (GHVDHGKT) is a binding site for GTP. T26 contacts Mg(2+). The G2 stretch occupies residues 60–64 (GITIS). The G3 stretch occupies residues 81-84 (DCPG). GTP-binding positions include 81 to 85 (DCPGH) and 136 to 139 (NKCD). The segment at 136–139 (NKCD) is G4. Residues 174 to 176 (SAL) form a G5 region.

This sequence belongs to the TRAFAC class translation factor GTPase superfamily. Classic translation factor GTPase family. EF-Tu/EF-1A subfamily. In terms of assembly, monomer.

The protein localises to the cytoplasm. The enzyme catalyses GTP + H2O = GDP + phosphate + H(+). Its function is as follows. GTP hydrolase that promotes the GTP-dependent binding of aminoacyl-tRNA to the A-site of ribosomes during protein biosynthesis. This chain is Elongation factor Tu, found in Geobacillus kaustophilus (strain HTA426).